The chain runs to 229 residues: MKLVLIRHGQSEWNKLNLFTGWHDVDLSEEGVVEAMTAGKRIKEAGLEFDVAFTSVLTRAIKTLNYVLEESDQMWVPVHKSWRLNERHYGALQGLNKQETAEKYGADQVQKWRRSYDTLPPLLEENDERQAKNDRRYQLLDTHAIPSGENLKVTLERVIPYWMDTIAPEIKAGRRVVIAAHGNSLRALVKFLEGISDDEIMELEIPTGVPLVYELNDDLKPVNKYYLDK.

Substrate contacts are provided by residues 7–14 (RHGQSEWN), 20–21 (TG), Arg59, 86–89 (ERHY), Lys97, 113–114 (RR), and 182–183 (GN). The active-site Tele-phosphohistidine intermediate is the His8. The active-site Proton donor/acceptor is the Glu86.

It belongs to the phosphoglycerate mutase family. BPG-dependent PGAM subfamily.

The enzyme catalyses (2R)-2-phosphoglycerate = (2R)-3-phosphoglycerate. The protein operates within carbohydrate degradation; glycolysis; pyruvate from D-glyceraldehyde 3-phosphate: step 3/5. Functionally, catalyzes the interconversion of 2-phosphoglycerate and 3-phosphoglycerate. This chain is 2,3-bisphosphoglycerate-dependent phosphoglycerate mutase, found in Listeria innocua serovar 6a (strain ATCC BAA-680 / CLIP 11262).